Consider the following 365-residue polypeptide: Glycine oxidase (365 aa).

Residues 12–13, 32–33, 40–41, 45–47, and I173 contribute to the FAD site; these read VI, DQ, SS, and GGI. R302 is a binding site for substrate. Position 327–333 (327–333) interacts with FAD; the sequence is HYRNGLV.

The protein belongs to the DAO family. ThiO subfamily. Monomer. FAD serves as cofactor.

It catalyses the reaction glycine + O2 + H2O = glyoxylate + H2O2 + NH4(+). It carries out the reaction sarcosine + O2 + H2O = methylamine + glyoxylate + H2O2. It participates in cofactor biosynthesis; thiamine diphosphate biosynthesis. In terms of biological role, catalyzes the oxidation of glycine, leading to glyoxyl imine and hydrogen peroxide as primary products; glyoxyl imine is used for the biosynthesis of the thiazole ring of thiamine. Otherwise, glyoxyl imine is spontaneously hydrolyzed in water to produce glyoxylate and ammonia. Can also use sarcosine (N-methylglycine) as substrate, and, to a lesser extent, N-ethylglycine and D-proline. Has no activity towards other amino-acids D-Asp, D-Glu, D-Gln, D-His, D-Leu, D-Lys, D-ornithine, D-Trp, D-Val, L-Ala, L-Asp, L-Glu, L-His, L-Leu, L-Lys, L-Met and L-Pro. This Pseudomonas putida (strain ATCC 47054 / DSM 6125 / CFBP 8728 / NCIMB 11950 / KT2440) protein is Glycine oxidase.